The primary structure comprises 745 residues: Capsid protein (745 aa).

3 disordered regions span residues 23 to 44, 598 to 619, and 660 to 700; these read RRPL…RRTV, PCKT…QVAD, and QPKR…EQAT. 2 stretches are compositionally biased toward basic and acidic residues: residues 599-612 and 675-691; these read CKTD…DRHP and GEFR…EERS.

This sequence belongs to the anelloviridae capsid protein family.

It is found in the virion. Self assemble to form an icosahedral capsid. This chain is Capsid protein, found in Homo sapiens (Human).